A 393-amino-acid polypeptide reads, in one-letter code: GDNF family receptor alpha-like (393 aa).

A signal peptide spans Met-1–Ser-19. At Gln-20–Gly-349 the chain is on the extracellular side. Asn-59, Asn-65, Asn-101, and Asn-115 each carry an N-linked (GlcNAc...) asparagine glycan. 11 disulfides stabilise this stretch: Cys-131–Cys-189, Cys-138–Cys-144, Cys-155–Cys-167, Cys-162–Cys-210, Cys-191–Cys-198, Cys-220–Cys-291, Cys-227–Cys-233, Cys-244–Cys-275, Cys-252–Cys-258, Cys-269–Cys-316, and Cys-293–Cys-304. The tract at residues Ala-149–Arg-228 is required for interaction with GDF15. A helical membrane pass occupies residues Glu-350 to Leu-370. Residues Lys-371 to Gln-393 are Cytoplasmic-facing.

It belongs to the GDNFR family. Interacts (via the extracellular domain) with GDF15 and RET; receptor of GDF15, mediates cellular signaling through interaction with RET after GDF15-binding. Interaction with RET requires previous GDF15-binding. Post-translationally, cleaved and inactivated by MMP14, inhibiting the GDF15-GFRAL aversive response. As to expression, expressed in the brainstem, restricted to cells in the area postrema and the immediately adjacent region of the nucleus tractus solitarius.

Its subcellular location is the cell membrane. Specifically inhibited by 3P10 monoclonal antibody. Strongly activated by LY3463251, a long-acting and stable agonist composed of GDF15 conjugated monomeric human IgG4 Fc. Brainstem-restricted receptor for GDF15 hormone, which triggers an aversive response, characterized by nausea, vomiting, and/or loss of appetite in response to various stresses. The aversive response is both required to reduce continuing exposure to those stresses at the time of exposure and to promote avoidance behavior in the future. The GDF15-GFRAL aversive response is triggered by stresses, such as anticancer drugs (camptothecin or cisplatin), cancers or drugs such as metformin. Upon interaction with its ligand, GDF15, mediates the GDF15-induced autophosphorylation and activation of the RET tyrosine kinase receptor, leading to activation of MAPK- and AKT- signaling pathways. Ligand-binding activates GFRAL-expressing neurons localized in the area postrema and nucleus tractus solitarius of the brainstem. The GDF15-GFRAL signal induces expression of genes involved in metabolism, such as lipid metabolism in adipose tissues. The polypeptide is GDNF family receptor alpha-like (Gfral) (Mus musculus (Mouse)).